A 65-amino-acid chain; its full sequence is Large ribosomal subunit protein bL35 (65 aa).

A disordered region spans residues 28-53 (NGSHNLEKKNRKRTRRLHQSTMLDNA). Residues 36 to 45 (KNRKRTRRLH) show a composition bias toward basic residues.

Belongs to the bacterial ribosomal protein bL35 family.

This Chlorobium luteolum (strain DSM 273 / BCRC 81028 / 2530) (Pelodictyon luteolum) protein is Large ribosomal subunit protein bL35.